A 190-amino-acid chain; its full sequence is Ion-translocating oxidoreductase complex subunit B (190 aa).

The segment at 1–26 (MTALWIAIAALSALGLLFGLVLGYAA) is hydrophobic. The 4Fe-4S domain occupies 32–90 (EEDPVAEQVDEILPQSQCGQCGYPGCRPYAEAVANGEMINKCAPGGEQVMLKLAELLNV). Positions 49, 52, 57, 73, 115, 118, 121, 125, 145, 148, 151, and 155 each coordinate [4Fe-4S] cluster. 4Fe-4S ferredoxin-type domains lie at 106–135 (QVAYIDEANCIGCTKCIQACPVDAIVGATR) and 136–165 (AMHTVITDLCTGCDLCVAPCPTDCIEMRPV).

Belongs to the 4Fe4S bacterial-type ferredoxin family. RnfB subfamily. As to quaternary structure, the complex is composed of six subunits: RnfA, RnfB, RnfC, RnfD, RnfE and RnfG. [4Fe-4S] cluster serves as cofactor.

It localises to the cell inner membrane. Functionally, part of a membrane-bound complex that couples electron transfer with translocation of ions across the membrane. This chain is Ion-translocating oxidoreductase complex subunit B, found in Serratia proteamaculans (strain 568).